We begin with the raw amino-acid sequence, 862 residues long: Probable glutaminase ARB_05535/05536 (862 aa).

The N-terminal stretch at 1–19 is a signal peptide; that stretch reads MLSWVLLAWAVACSALAGA. 7 N-linked (GlcNAc...) asparagine glycosylation sites follow: asparagine 106, asparagine 273, asparagine 436, asparagine 448, asparagine 486, asparagine 610, and asparagine 744. Residues 798 to 862 form a disordered region; the sequence is FLDDKDNNSP…SQMTIVNEND (65 aa). The segment covering 853 to 862 has biased composition (polar residues); that stretch reads SQMTIVNEND.

The protein belongs to the fungal glutaminase gtaA family.

Its subcellular location is the secreted. The enzyme catalyses L-glutamine + H2O = L-glutamate + NH4(+). In terms of biological role, glutaminase catalyzes the hydrolysis of glutamine to glutamic acid and plays a key role in nitrogen metabolism. The polypeptide is Probable glutaminase ARB_05535/05536 (Arthroderma benhamiae (strain ATCC MYA-4681 / CBS 112371) (Trichophyton mentagrophytes)).